Here is a 530-residue protein sequence, read N- to C-terminus: Autoinducer-2 kinase (530 aa).

This sequence belongs to the FGGY kinase family.

Its subcellular location is the cytoplasm. The catalysed reaction is (S)-4,5-dihydroxypentane-2,3-dione + ATP = (2S)-2-hydroxy-3,4-dioxopentyl phosphate + ADP + H(+). In terms of biological role, catalyzes the phosphorylation of autoinducer-2 (AI-2) to phospho-AI-2, which subsequently inactivates the transcriptional regulator LsrR and leads to the transcription of the lsr operon. Phosphorylates the ring-open form of (S)-4,5-dihydroxypentane-2,3-dione (DPD), which is the precursor to all AI-2 signaling molecules, at the C5 position. The protein is Autoinducer-2 kinase of Escherichia coli (strain SMS-3-5 / SECEC).